Consider the following 510-residue polypeptide: Bifunctional purine biosynthesis protein PurH (510 aa).

The MGS-like domain occupies 1-143; the sequence is MTKRALISVS…KNHDAVLVLV (143 aa).

It belongs to the PurH family.

The catalysed reaction is (6R)-10-formyltetrahydrofolate + 5-amino-1-(5-phospho-beta-D-ribosyl)imidazole-4-carboxamide = 5-formamido-1-(5-phospho-D-ribosyl)imidazole-4-carboxamide + (6S)-5,6,7,8-tetrahydrofolate. It catalyses the reaction IMP + H2O = 5-formamido-1-(5-phospho-D-ribosyl)imidazole-4-carboxamide. The protein operates within purine metabolism; IMP biosynthesis via de novo pathway; 5-formamido-1-(5-phospho-D-ribosyl)imidazole-4-carboxamide from 5-amino-1-(5-phospho-D-ribosyl)imidazole-4-carboxamide (10-formyl THF route): step 1/1. It participates in purine metabolism; IMP biosynthesis via de novo pathway; IMP from 5-formamido-1-(5-phospho-D-ribosyl)imidazole-4-carboxamide: step 1/1. The polypeptide is Bifunctional purine biosynthesis protein PurH (Deinococcus radiodurans (strain ATCC 13939 / DSM 20539 / JCM 16871 / CCUG 27074 / LMG 4051 / NBRC 15346 / NCIMB 9279 / VKM B-1422 / R1)).